Here is a 309-residue protein sequence, read N- to C-terminus: MSNVGQQLLSGGLSGLATTVCLQPFDLLKTRLQQGDGSTWRPTRPHTSIILDITRDVIHSGGWRGLWRGTTPSLVRNVPGVALYMTSLTQLRALMATSPYFASLRRRPQNGDANKNTSSVLPKLTSQGNLIAGATTRVGVGFLLNPFSVLKARFESNIYAYESLTGAFGTIVRQGPSELLRGFLASSLRDAPYAGLFVVFYEGIKHEASYVLPPVTSTQATLIHGLSAASAGAIATMATHPFDVIKTKIQVRTEAQYHGFLTTIATIWKQRGITGYFDGASLRMSRKVLSSAIGWAVYEGGLMLMRTST.

Solcar repeat units lie at residues 2–94, 124–207, and 219–304; these read SNVG…LRAL, LTSQ…IKHE, and QATL…GLML. A run of 6 helical transmembrane segments spans residues 8 to 33, 69 to 95, 130 to 155, 182 to 205, 223 to 249, and 279 to 297; these read LLSGGLSGLATTVCLQPFDLLKTRLQ, GTTPSLVRNVPGVALYMTSLTQLRALM, LIAGATTRVGVGFLLNPFSVLKARFE, GFLASSLRDAPYAGLFVVFYEGIK, IHGLSAASAGAIATMATHPFDVIKTKI, and GASLRMSRKVLSSAIGWAV.

The protein belongs to the mitochondrial carrier (TC 2.A.29) family. SLC25A38 subfamily.

It is found in the mitochondrion inner membrane. It carries out the reaction glycine(in) = glycine(out). Mitochondrial glycine transporter that imports glycine into the mitochondrial matrix. Plays an important role in providing glycine for the first enzymatic step in heme biosynthesis, the condensation of glycine with succinyl-CoA to produce 5-aminolevulinate (ALA) in the mitochondrial matrix. The chain is Mitochondrial glycine transporter from Laccaria bicolor (strain S238N-H82 / ATCC MYA-4686) (Bicoloured deceiver).